The following is a 195-amino-acid chain: NADH-quinone oxidoreductase subunit B (195 aa).

Residues cysteine 74, cysteine 75, cysteine 139, and cysteine 169 each contribute to the [4Fe-4S] cluster site.

This sequence belongs to the complex I 20 kDa subunit family. As to quaternary structure, NDH-1 is composed of 14 different subunits. Subunits NuoB, C, D, E, F, and G constitute the peripheral sector of the complex. [4Fe-4S] cluster is required as a cofactor.

It is found in the cell inner membrane. The enzyme catalyses a quinone + NADH + 5 H(+)(in) = a quinol + NAD(+) + 4 H(+)(out). Its function is as follows. NDH-1 shuttles electrons from NADH, via FMN and iron-sulfur (Fe-S) centers, to quinones in the respiratory chain. The immediate electron acceptor for the enzyme in this species is believed to be ubiquinone. Couples the redox reaction to proton translocation (for every two electrons transferred, four hydrogen ions are translocated across the cytoplasmic membrane), and thus conserves the redox energy in a proton gradient. The sequence is that of NADH-quinone oxidoreductase subunit B from Methylorubrum populi (strain ATCC BAA-705 / NCIMB 13946 / BJ001) (Methylobacterium populi).